Consider the following 253-residue polypeptide: Phosphoglycerate mutase 2 (253 aa).

The residue at position 3 (Thr3) is a Phosphothreonine. Residues 10 to 17 (RHGESLWN), 23 to 24 (CG), Arg62, 89 to 92 (ERHY), Lys100, and 116 to 117 (RR) each bind substrate. The Tele-phosphohistidine intermediate role is filled by His11. Residue Ser14 is modified to Phosphoserine. Glu89 (proton donor/acceptor) is an active-site residue. The residue at position 118 (Ser118) is a Phosphoserine. Thr121 bears the Phosphothreonine mark. Tyr132 and Tyr133 each carry phosphotyrosine. Residue Ser135 is modified to Phosphoserine. Residue Thr152 is modified to Phosphothreonine. 187–188 (GN) is a binding site for substrate.

This sequence belongs to the phosphoglycerate mutase family. BPG-dependent PGAM subfamily. As to quaternary structure, homodimer. Interacts with ENO1. As to expression, expressed in the testes (at protein level).

The catalysed reaction is (2R)-2-phosphoglycerate = (2R)-3-phosphoglycerate. It carries out the reaction (2R)-3-phospho-glyceroyl phosphate = (2R)-2,3-bisphosphoglycerate + H(+). Functionally, interconversion of 3- and 2-phosphoglycerate with 2,3-bisphosphoglycerate as the primer of the reaction. Can also catalyze the reaction of EC 5.4.2.4 (synthase), but with a reduced activity. The polypeptide is Phosphoglycerate mutase 2 (Pgam2) (Mus musculus (Mouse)).